The following is a 1134-amino-acid chain: Ubinuclein-1 (1134 aa).

2 disordered regions span residues 1–38 (MSEPHRVQFTSLPGSLNPAFLKKSRKEEAGAGEQHQDC) and 78–98 (LQPGDKKKDLSDPFNDEEKER). A sufficient for interaction with HIRA region spans residues 1 to 166 (MSEPHRVQFT…YGGFYINSGT (166 aa)). Basic and acidic residues-rich tracts occupy residues 25–38 (RKEEAGAGEQHQDC) and 81–98 (GDKKKDLSDPFNDEEKER). T166 bears the Phosphothreonine mark. A disordered region spans residues 171 to 220 (QASESEDDFIKEKKKKSPKKRKLKEGGEKIKKKKKDDTYDKEKKSKKSKF). Phosphoserine occurs at positions 173 and 175. Basic residues predominate over residues 182-193 (EKKKKSPKKRKL). Basic and acidic residues predominate over residues 194–213 (KEGGEKIKKKKKDDTYDKEK). K222 is modified (N6-acetyllysine). The segment covering 253–268 (QKEKEAQKKREEEHKP) has biased composition (basic and acidic residues). Disordered regions lie at residues 253-282 (QKEKEAQKKREEEHKPVAVPSAEAQGLREL), 321-358 (SESPEGSPFRDMDDGSDSLGVGLDQEFRQPSSLPEGLP), 480-504 (EEEKDKEQRDRICSDEEEDEEKGGR), and 594-660 (PSKI…LEDS). Residues S323, S336, S338, and S493 each carry the phosphoserine modification. A coiled-coil region spans residues 479 to 542 (LEEEKDKEQR…SQDLERNNKA (64 aa)). 2 stretches are compositionally biased toward basic and acidic residues: residues 480 to 493 (EEEKDKEQRDRICS) and 598 to 610 (KVKESSTKPDKKV). Phosphoserine occurs at positions 660 and 677. Disordered stretches follow at residues 712 to 836 (TEEK…SPTQ) and 852 to 986 (QGFH…GVAK). Low complexity-rich tracts occupy residues 792–804 (GPQVAVPVPGPQV) and 856–891 (PSAPATSGGLSASSSSSHKTPASSSSALSHPAKPHS). The span at 892-905 (VSSAGSSYKNNPFA) shows a compositional bias: polar residues. Over residues 906–932 (SSISKHGVSSGSSSSGGTPVQSSVSGS) the composition is skewed to low complexity. The span at 941-950 (SVGQATSRPV) shows a compositional bias: polar residues. Residues 973-982 (PNGDSSGGTQ) show a composition bias toward gly residues. Position 1025 is a phosphoserine (S1025). Low complexity predominate over residues 1093 to 1108 (GLHSSPPHAAPLPHAA). Residues 1093 to 1134 (GLHSSPPHAAPLPHAAVPTHIPQSLPGASQLHGKGPAVPRKL) form a disordered region.

This sequence belongs to the ubinuclein family. As to quaternary structure, component of a complex that includes at least ASF1A, CABIN1, HIRA, histone H3.3 and UBN1. Interacts with HIRA (via WD repeat domain); the interaction is direct. Interacts with ASF1A, CEBPA, TJP1, TJP2 and TJP3. (Microbial infection) Interacts with Epstein-Barr virus BZLF1. As to expression, ubiquitous. Also expressed in numerous tumors and cancer cell lines.

It localises to the nucleus. The protein localises to the nucleoplasm. Its subcellular location is the PML body. It is found in the cell junction. The protein resides in the tight junction. Functionally, acts as a novel regulator of senescence. Involved in the formation of senescence-associated heterochromatin foci (SAHF), which represses expression of proliferation-promoting genes. Binds to proliferation-promoting genes. May be required for replication-independent chromatin assembly. The chain is Ubinuclein-1 (UBN1) from Homo sapiens (Human).